The sequence spans 1141 residues: DNA-directed RNA polymerase subunit beta (1141 aa).

The segment at 1117–1141 (GINISREEPPGQLDDTPDTFSRGGM) is disordered.

It belongs to the RNA polymerase beta chain family. The RNAP catalytic core consists of 2 alpha, 1 beta, 1 beta' and 1 omega subunit. When a sigma factor is associated with the core the holoenzyme is formed, which can initiate transcription.

The catalysed reaction is RNA(n) + a ribonucleoside 5'-triphosphate = RNA(n+1) + diphosphate. DNA-dependent RNA polymerase catalyzes the transcription of DNA into RNA using the four ribonucleoside triphosphates as substrates. The sequence is that of DNA-directed RNA polymerase subunit beta from Rubrobacter xylanophilus (strain DSM 9941 / JCM 11954 / NBRC 16129 / PRD-1).